The chain runs to 888 residues: Leucine--tRNA ligase (888 aa).

The 'HIGH' region signature appears at 42–52 (PYPSGKLHMGH). A 'KMSKS' region motif is present at residues 640–644 (TMSKS). Lys-643 lines the ATP pocket.

This sequence belongs to the class-I aminoacyl-tRNA synthetase family.

The protein resides in the cytoplasm. The enzyme catalyses tRNA(Leu) + L-leucine + ATP = L-leucyl-tRNA(Leu) + AMP + diphosphate. This is Leucine--tRNA ligase from Polaromonas naphthalenivorans (strain CJ2).